A 66-amino-acid chain; its full sequence is Large ribosomal subunit protein bL35 (66 aa).

The span at 1-26 (MPKMKTHRGSAKRFKKTASGKLKRGH) shows a compositional bias: basic residues. Positions 1–29 (MPKMKTHRGSAKRFKKTASGKLKRGHAYT) are disordered.

Belongs to the bacterial ribosomal protein bL35 family.

This is Large ribosomal subunit protein bL35 from Geobacillus kaustophilus (strain HTA426).